A 324-amino-acid polypeptide reads, in one-letter code: o-succinylbenzoate synthase (324 aa).

Lysine 135 functions as the Proton donor in the catalytic mechanism. Residues aspartate 163, glutamate 192, and aspartate 215 each coordinate Mg(2+). The active-site Proton acceptor is lysine 237.

It belongs to the mandelate racemase/muconate lactonizing enzyme family. MenC type 1 subfamily. A divalent metal cation serves as cofactor.

It catalyses the reaction (1R,6R)-6-hydroxy-2-succinyl-cyclohexa-2,4-diene-1-carboxylate = 2-succinylbenzoate + H2O. The protein operates within quinol/quinone metabolism; 1,4-dihydroxy-2-naphthoate biosynthesis; 1,4-dihydroxy-2-naphthoate from chorismate: step 4/7. Its pathway is quinol/quinone metabolism; menaquinone biosynthesis. Converts 2-succinyl-6-hydroxy-2,4-cyclohexadiene-1-carboxylate (SHCHC) to 2-succinylbenzoate (OSB). In Aliivibrio fischeri (strain MJ11) (Vibrio fischeri), this protein is o-succinylbenzoate synthase.